Consider the following 464-residue polypeptide: NADH dehydrogenase [ubiquinone] flavoprotein 1, mitochondrial (464 aa).

The N-terminal 20 residues, 1 to 20, are a transit peptide targeting the mitochondrion; sequence MLAARRLLGWSLPARVSVRF. N6-acetyllysine; alternate is present on K81. At K81 the chain carries N6-succinyllysine; alternate. 87 to 96 is a binding site for NADH; the sequence is GRGGAGFPTG. K104 carries the N6-acetyllysine modification. Residue 199–247 participates in FMN binding; that stretch reads RGAGAYICGEETALIESIEGKQGKPRLKPPFPADVGVFGCPTTVANVET. R257 carries the omega-N-methylarginine modification. Position 375 is an N6-acetyllysine (K375). Residues C379, C382, C385, and C425 each contribute to the [4Fe-4S] cluster site.

Belongs to the complex I 51 kDa subunit family. In terms of assembly, core subunit of respiratory chain NADH dehydrogenase (Complex I) which is composed of 45 different subunits. This is a component of the flavoprotein-sulfur (FP) fragment of the enzyme. Interacts with RAB5IF. It depends on FMN as a cofactor. [4Fe-4S] cluster serves as cofactor.

Its subcellular location is the mitochondrion inner membrane. It catalyses the reaction a ubiquinone + NADH + 5 H(+)(in) = a ubiquinol + NAD(+) + 4 H(+)(out). In terms of biological role, core subunit of the mitochondrial membrane respiratory chain NADH dehydrogenase (Complex I) which catalyzes electron transfer from NADH through the respiratory chain, using ubiquinone as an electron acceptor. Part of the peripheral arm of the enzyme, where the electrons from NADH are accepted by flavin mononucleotide (FMN) and then passed along a chain of iron-sulfur clusters by electron tunnelling to the final acceptor ubiquinone. Contains FMN, which is the initial electron acceptor as well as one iron-sulfur cluster. In Pongo pygmaeus (Bornean orangutan), this protein is NADH dehydrogenase [ubiquinone] flavoprotein 1, mitochondrial.